The chain runs to 711 residues: Hydroperoxide isomerase ALOXE3 (711 aa).

The PLAT domain occupies 2-119 (AVYRLCVTTG…TVELRPGTAR (118 aa)). The 593-residue stretch at 119-711 (RTICQDALPL…PPLIENSVSI (593 aa)) folds into the Lipoxygenase domain. Fe cation-binding residues include His408, His413, His588, Asn592, and Ile711.

This sequence belongs to the lipoxygenase family. Fe cation serves as cofactor.

The protein localises to the cytoplasm. It carries out the reaction a hydroperoxyeicosatetraenoate = a hydroxy-epoxy-eicosatetraenoate. It catalyses the reaction a hydroperoxyeicosatetraenoate = an oxoeicosatetraenoate + H2O. The enzyme catalyses (12R)-hydroperoxy-(5Z,8Z,10E,14Z)-eicosatetraenoate = (8R)-hydroxy-(11R,12R)-epoxy-(5Z,9E,14Z)-eicosatrienoate. The catalysed reaction is (12S)-hydroperoxy-(5Z,8Z,10E,14Z)-eicosatetraenoate = (8R)-hydroxy-(11S,12S)-epoxy-(5Z,9E,14Z)-eicosatrienoate. It carries out the reaction (12S)-hydroperoxy-(5Z,8Z,10E,14Z)-eicosatetraenoate = (10R)-hydroxy-(11S,12S)-epoxy-(5Z,8Z,14Z)-eicosatrienoate. It catalyses the reaction (15S)-hydroperoxy-(5Z,8Z,11Z,13E)-eicosatetraenoate = (13R)-hydroxy-(14S,15S)-epoxy-(5Z,8Z,11Z)-eicosatrienoate. The enzyme catalyses (5S)-hydroperoxy-(6E,8Z,11Z,14Z)-eicosatetraenoate = 7R-hydroxy-5S,6S-epoxy-(8Z,11Z,14Z)-eicosatrienoate. The catalysed reaction is (13S)-hydroperoxy-(9Z,11E)-octadecadienoate = 11-hydroxy-(12S,13S)-epoxy-(9Z)-octadecenoate. It carries out the reaction N-[omega-(9R)-hydroperoxy-(10E,12Z)-octadecadienoyloxy]acyl-beta-D-glucosyl-(1&lt;-&gt;1)-octadecasphing-4E-enine = a N-[omega-(9R,10R)-epoxy-(13R)-hydroxy-(11E)-octadecenoyloxy]acyl-beta-D-glucosyl-(1&lt;-&gt;1)-sphing-4E-enine. It catalyses the reaction a N-[omega-(9R)-hydroperoxy-(10E,12Z)-octadecadienoyloxy]-acylsphin-4E-enine = a N-[omega-(9R,10R)-epoxy-(13R)-hydroxy-(11E)-octadecenoyloxy]-acylsphing-4E-enine. The enzyme catalyses (12R)-hydroperoxy-(5Z,8Z,10E,14Z)-eicosatetraenoate = 12-oxo-(5Z,8Z,10E,14Z)-eicosatetraenoate + H2O. The catalysed reaction is (12S)-hydroperoxy-(5Z,8Z,10E,14Z)-eicosatetraenoate = 12-oxo-(5Z,8Z,10E,14Z)-eicosatetraenoate + H2O. It carries out the reaction (15S)-hydroperoxy-(5Z,8Z,11Z,13E)-eicosatetraenoate = 15-oxo-(5Z,8Z,11Z,13E)-eicosatetraenoate + H2O. It catalyses the reaction (13S)-hydroperoxy-(9Z,11E)-octadecadienoate = 13-oxo-(9Z,11E)-octadecadienoate + H2O. The enzyme catalyses (8S)-hydroperoxy-(5Z,9E,11Z,14Z)-eicosatetraenoate = (10R)-hydroxy-(8S,9S)-epoxy-(5Z,11Z,14Z)-eicosatrienoate. The catalysed reaction is (8R)-hydroperoxy-(5Z,9E,11Z,14Z)-eicosatetraenoate = 8-oxo-(5Z,9E,11Z,14Z)-eicosatetraenoate + H2O. It carries out the reaction (8S)-hydroperoxy-(5Z,9E,11Z,14Z)-eicosatetraenoate = 8-oxo-(5Z,9E,11Z,14Z)-eicosatetraenoate + H2O. Its pathway is lipid metabolism; hydroperoxy eicosatetraenoic acid biosynthesis. It participates in lipid metabolism; sphingolipid metabolism. Non-heme iron-containing lipoxygenase which is atypical in that it displays a prominent hydroperoxide isomerase activity and a reduced lipoxygenases activity. The hydroperoxide isomerase activity catalyzes the isomerization of hydroperoxides, derived from arachidonic and linoleic acid by ALOX12B, into hepoxilin-type epoxyalcohols and ketones. In presence of oxygen, oxygenates polyunsaturated fatty acids, including arachidonic acid, to produce fatty acid hydroperoxides. In the skin, acts downstream of ALOX12B on the linoleate moiety of esterified omega-hydroxyacyl-sphingosine (EOS) ceramides to produce an epoxy-ketone derivative, a crucial step in the conjugation of omega-hydroxyceramide to membrane proteins. Therefore plays a crucial role in the synthesis of corneocytes lipid envelope and the establishment of the skin barrier to water loss. In parallel, it may have a signaling function in barrier formation through the production of hepoxilins metabolites. Also plays a role in adipocyte differentiation through hepoxilin A3 and hepoxilin B3 production which in turn activate PPARG. Through the production of hepoxilins in the spinal cord, it may regulate inflammatory tactile allodynia. The sequence is that of Hydroperoxide isomerase ALOXE3 from Rattus norvegicus (Rat).